The chain runs to 557 residues: Formate--tetrahydrofolate ligase (557 aa).

65–72 (SPAGEGKT) serves as a coordination point for ATP.

This sequence belongs to the formate--tetrahydrofolate ligase family.

It catalyses the reaction (6S)-5,6,7,8-tetrahydrofolate + formate + ATP = (6R)-10-formyltetrahydrofolate + ADP + phosphate. Its pathway is one-carbon metabolism; tetrahydrofolate interconversion. The protein is Formate--tetrahydrofolate ligase of Methylobacillus flagellatus (strain ATCC 51484 / DSM 6875 / VKM B-1610 / KT).